The chain runs to 63 residues: MMEQGKDCREVVTQLAASRNAIDRAMGLIVSTNLEHCVRESLEKGEDTQNLVKEAVDLLVKSR.

This is an uncharacterized protein from Bacillus subtilis (strain 168).